The chain runs to 251 residues: MNLTSIPALQDNYIWTLNDDSGRCLIVDPGEAAPVLRAITENQWQPQAILLTHHHHDHVGGVAELLSHYPDLTVYGPQETSHKGANSLVGDGDRIHVLGLDFTIIATPGHTLGHISYFSHPYLFCGDTLFSAGCGRLFEGTAKQMFESFQKLNQLPDDTLVCCAHEYTLSNLTFSHTFYPQDTEIARYYHEIKELRSKNGITLPTKLELERKINVFLRTKDVELQRLISTEPDHLDEWEIFATLREKKDSF.

Positions 53, 55, 57, 58, 110, 127, and 165 each coordinate Zn(2+).

It belongs to the metallo-beta-lactamase superfamily. Glyoxalase II family. In terms of assembly, monomer. Zn(2+) serves as cofactor.

It carries out the reaction an S-(2-hydroxyacyl)glutathione + H2O = a 2-hydroxy carboxylate + glutathione + H(+). It functions in the pathway secondary metabolite metabolism; methylglyoxal degradation; (R)-lactate from methylglyoxal: step 2/2. Its function is as follows. Thiolesterase that catalyzes the hydrolysis of S-D-lactoyl-glutathione to form glutathione and D-lactic acid. The sequence is that of Hydroxyacylglutathione hydrolase from Erwinia tasmaniensis (strain DSM 17950 / CFBP 7177 / CIP 109463 / NCPPB 4357 / Et1/99).